A 208-amino-acid chain; its full sequence is AN1-type zinc finger protein 6 (208 aa).

The A20-type zinc finger occupies 8–42; that stretch reads SQVPMLCSTGCGFYGNPRTNGMCSVCYKEHLQRQN. Zn(2+) contacts are provided by Cys-14, Cys-18, Cys-30, and Cys-33. The interval 41–110 is disordered; it reads QNSSNGRISP…ASSQVDSTSV (70 aa). The residue at position 49 (Ser-49) is a Phosphoserine. A compositionally biased stretch (polar residues) spans 54–68; sequence SVTSLSESLPVQCTD. Residues 83-94 are compositionally biased toward low complexity; it reads SSVQPSPVSNQS. The segment covering 95–110 has biased composition (polar residues); the sequence is LLSESVASSQVDSTSV. The AN1-type zinc finger occupies 143-189; that stretch reads KQKKNRCFMCRKKVGLTGFECRCGNVYCGVHRYSDVHNCSYNYKADA. The Zn(2+) site is built by Cys-149, Cys-152, Cys-163, Cys-165, Cys-170, His-173, His-179, and Cys-181. Lys-204 carries the post-translational modification N6-acetyllysine.

Interacts with PKN1.

This Bos taurus (Bovine) protein is AN1-type zinc finger protein 6 (ZFAND6).